We begin with the raw amino-acid sequence, 795 residues long: MQQQPQPQPLPHSSYYTQTESELLQIEAGGTGLTFPPHRSEMAATSSQLQQASMSSNVASTATSSNLDVPSGGSTGSGSGGQTTSHFVSPLQRRHCQPPSHLPLNSVASPLRTASYKTAAAVAGHGFHHSHHQQLDFQRNSQSDDDSGCALEEYTWVPPGLRPDQVRLYFSQLPDDKVPYVNSPGEKYRVKQLLHQLPPQDNEVRYCHSLSDEERKELRIFSAQRKREALGRGAVRLLSDERPCKGCEESLSGGDIVVFAQRLGAQLCWHPGCFVCSVCKELLVDLIYFQRDGNLYCGRHHAETQKPRCSACDEIIFSDECTEAEGRTWHMKHFACQECEHQLGGQRYIMREGKPYCLGCFDTMFAEYCDYCGEVIGVDQGQMSHDGQHWHATDQCFSCCTCRCSLLGRPFLPRRGTIYCSIACSKGEPPTPSDTSSGPQLRPTHRASTSSQIARSPRRSGDRDRERESSRKANHGHGPVKGTGSAGDLLERQERKRMEAAGVADLLLGGGVPGMPRPAHPPPIDLTELGISLDNICAGDKSIFGDSQLTSSMPDMLLSKAEDSHSYQSIDKINLNSPSNSDLTQSTQELANELELDNDPVRELPHDGYEQLFANNRNTKKGHELQDMQGEEDGEQLDNRPLKEVRFHSVQDTMSRSKSYTDNSNARRRRRRRNQSRSSSEMQINQTNLRLHNAQTQAGTGTGAHNLLNNLDNCDVASICSTCSSSSSSDMDDYVYRLPARKHYGGVRVAYVPNDALAYERKKKLAQDPSLAAAASAAVPGVPGVMNESKNCTIS.

Positions 30 to 96 (GTGLTFPPHR…FVSPLQRRHC (67 aa)) are disordered. Over residues 52 to 66 (ASMSSNVASTATSSN) the composition is skewed to low complexity. A PET domain is found at 135 to 243 (LDFQRNSQSD…AVRLLSDERP (109 aa)). LIM zinc-binding domains are found at residues 242 to 306 (RPCK…ETQK), 307 to 367 (PRCS…MFAE), and 368 to 430 (YCDY…GEPP). Disordered regions lie at residues 427 to 487 (GEPP…GSAG) and 616 to 684 (NRNT…EMQI). Basic and acidic residues-rich tracts occupy residues 459–471 (RSGDRDRERESSR) and 637–649 (LDNRPLKEVRFHS). Residues 650–662 (VQDTMSRSKSYTD) show a composition bias toward polar residues. The span at 666 to 675 (ARRRRRRRNQ) shows a compositional bias: basic residues.

Belongs to the prickle / espinas / testin family.

This Drosophila pseudoobscura pseudoobscura (Fruit fly) protein is Protein espinas.